The sequence spans 528 residues: FAD-dependent monooxygenase DEP2 (528 aa).

Positions 1–23 are cleaved as a signal peptide; sequence MEDGRSTFKVIIIGAGVTGLTLA. 4 residues coordinate FAD: aspartate 37, arginine 110, aspartate 311, and glycine 324. Residues 479-499 form a helical membrane-spanning segment; sequence VFPQILGVLMVMWSSVWLFHL. N-linked (GlcNAc...) asparagine glycosylation occurs at asparagine 521.

Belongs to the paxM FAD-dependent monooxygenase family. FAD is required as a cofactor.

Its subcellular location is the membrane. The protein operates within polyketide biosynthesis. In terms of biological role, FAD-dependent monooxygenase; part of the gene cluster that mediates the biosynthesis of depudecin, a highly oxidized eleven-carbon linear polyketide that acts as a histone deacetylase (HDAC) inhibitor and makes a small contribution to pathogenesis. The reducing polyketide synthase DEP5 is the central enzyme in depudecin biosynthesis by yielding the backbone polyketide chain. The monooxygenases DEP2 and DEP4, as well as the uncharacterized protein DEP1, then act as tailoring enzymes to modify the intermediate polyketide chain into depudecin. In Alternaria brassicicola (Dark leaf spot agent), this protein is FAD-dependent monooxygenase DEP2.